Reading from the N-terminus, the 47-residue chain is Large ribosomal subunit protein bL34 (47 aa).

The interval 1 to 28 (MAKGKRTFQPNNRRRARVHGFRTRMRTR) is disordered.

Belongs to the bacterial ribosomal protein bL34 family.

The polypeptide is Large ribosomal subunit protein bL34 (Corynebacterium efficiens (strain DSM 44549 / YS-314 / AJ 12310 / JCM 11189 / NBRC 100395)).